The chain runs to 37 residues: M-oxotoxin-Ot2c (37 aa).

In terms of tissue distribution, expressed by the venom gland.

It localises to the secreted. Disrupts biological membranes, particularly those rich in phosphocholine. Has antimicrobial activity against Gram-negative bacterium E.coli, Gram-positive bacteria B.subtilis and S.aureus, and hemolytic activity against sheep, pig and guinea pig red blood cells. Has insecticidal activity against S.frugiperda ovarian cells by opening non-selective ion channels. Enhances the insecticidal activity of spider venom neurotoxic peptides. In Oxyopes takobius (Lynx spider), this protein is M-oxotoxin-Ot2c.